A 453-amino-acid chain; its full sequence is Bifunctional protein GlmU (453 aa).

The interval 1–226 (MVAIAILAAG…YEEILGINDR (226 aa)) is pyrophosphorylase. UDP-N-acetyl-alpha-D-glucosamine is bound by residues 7 to 10 (LAAG), Lys21, Gln73, and 78 to 79 (GT). Residue Asp103 coordinates Mg(2+). Residues Gly140, Glu155, Asn170, and Asn224 each coordinate UDP-N-acetyl-alpha-D-glucosamine. Asn224 contributes to the Mg(2+) binding site. The interval 227-247 (KQLALAYQILQNRIKDQAMAA) is linker. An N-acetyltransferase region spans residues 248–453 (GVTLIDPDSI…GWRLKQPDPT (206 aa)). 2 residues coordinate UDP-N-acetyl-alpha-D-glucosamine: Arg329 and Lys347. His359 (proton acceptor) is an active-site residue. Tyr362 and Asn373 together coordinate UDP-N-acetyl-alpha-D-glucosamine. Acetyl-CoA is bound by residues Ala376, 382–383 (NY), Ser401, Ala419, and Arg436.

This sequence in the N-terminal section; belongs to the N-acetylglucosamine-1-phosphate uridyltransferase family. The protein in the C-terminal section; belongs to the transferase hexapeptide repeat family. In terms of assembly, homotrimer. Mg(2+) serves as cofactor.

The protein localises to the cytoplasm. It catalyses the reaction alpha-D-glucosamine 1-phosphate + acetyl-CoA = N-acetyl-alpha-D-glucosamine 1-phosphate + CoA + H(+). The catalysed reaction is N-acetyl-alpha-D-glucosamine 1-phosphate + UTP + H(+) = UDP-N-acetyl-alpha-D-glucosamine + diphosphate. The protein operates within nucleotide-sugar biosynthesis; UDP-N-acetyl-alpha-D-glucosamine biosynthesis; N-acetyl-alpha-D-glucosamine 1-phosphate from alpha-D-glucosamine 6-phosphate (route II): step 2/2. Its pathway is nucleotide-sugar biosynthesis; UDP-N-acetyl-alpha-D-glucosamine biosynthesis; UDP-N-acetyl-alpha-D-glucosamine from N-acetyl-alpha-D-glucosamine 1-phosphate: step 1/1. It participates in bacterial outer membrane biogenesis; LPS lipid A biosynthesis. Catalyzes the last two sequential reactions in the de novo biosynthetic pathway for UDP-N-acetylglucosamine (UDP-GlcNAc). The C-terminal domain catalyzes the transfer of acetyl group from acetyl coenzyme A to glucosamine-1-phosphate (GlcN-1-P) to produce N-acetylglucosamine-1-phosphate (GlcNAc-1-P), which is converted into UDP-GlcNAc by the transfer of uridine 5-monophosphate (from uridine 5-triphosphate), a reaction catalyzed by the N-terminal domain. The chain is Bifunctional protein GlmU from Cyanothece sp. (strain PCC 7425 / ATCC 29141).